A 628-amino-acid chain; its full sequence is Choline transporter-like protein 2 (628 aa).

Residues 1 to 31 (MSSEDLQDHHEIGNEVIKKKGVYTKKKCQDC) are Cytoplasmic-facing. Residues 32–52 (FFLILFLLFWAGMIVVAAFGV) traverse the membrane as a helical segment. Over 53 to 204 (KNGKPDRIVK…EILTDLTNSW (152 aa)) the chain is Extracellular. Asn82, Asn118, Asn146, and Asn168 each carry an N-linked (GlcNAc...) asparagine glycan. The helical transmembrane segment at 205–225 (RYLIYGALIAMGLGLTWIFLL) threads the bilayer. Residue Arg226 is a topological domain, cytoplasmic. The chain crosses the membrane as a helical span at residues 227–247 (FFAGFITWLTVFAAYACLGLL). At 248–282 (TAQVYFQWQDSKDAYENTIPSQRLVMQEKNILALK) the chain is on the extracellular side. Residues 283-303 (VIFIILCVVCGIFALILLALF) traverse the membrane as a helical segment. Residues 304-319 (SRIRIAIRIIKECSRA) lie on the Cytoplasmic side of the membrane. A helical transmembrane segment spans residues 320–340 (IGIMPSIFFFPIFIFLLLCGF). Topologically, residues 341 to 381 (TVYWVYIGVYLATAGSPTYDDQYRFTGYEADSKLQKIQIYH) are extracellular. The chain crosses the membrane as a helical span at residues 382 to 402 (FFGYLWTFAFILALNQTTIAG). At 403-432 (AISSWYWVQDKKDTPFFPVWSSFFRVIRYH) the chain is on the cytoplasmic side. A helical membrane pass occupies residues 433 to 453 (LGSIALGSLILAIVQFIRWVL). Over 454–530 (RFLEKKFKGK…RVAAVNLVSS (77 aa)) the chain is Extracellular. Residues 531-551 (FLMFLGRVFITAATVGISLYL) traverse the membrane as a helical segment. Residues 552 to 559 (LKEHENLS) are Cytoplasmic-facing. Residues 560 to 580 (FYIIPVILIGFIAFAISTGFM) form a helical membrane-spanning segment. Over 581–628 (SVYDMSIDTMLLCFCEDCERNDGSPERPYYMSKSLRKFVDGKGRSKCC) the chain is Extracellular.

This sequence belongs to the CTL (choline transporter-like) family.

It is found in the cell membrane. Its subcellular location is the mitochondrion outer membrane. It carries out the reaction choline(out) + n H(+)(in) = choline(in) + n H(+)(out). The enzyme catalyses ethanolamine(out) + n H(+)(in) = ethanolamine(in) + n H(+)(out). Its function is as follows. Choline/H+ antiporter, mainly in mitochodria. Also acts as a low-affinity ethanolamine/H+ antiporter, regulating the supply of extracellular ethanolamine (Etn) for the CDP-Etn pathway, redistribute intracellular Etn and balance the CDP-Cho and CDP-Etn arms of the Kennedy pathway. This chain is Choline transporter-like protein 2 (slc44a2), found in Dictyostelium discoideum (Social amoeba).